Here is a 1338-residue protein sequence, read N- to C-terminus: Thioester-containing protein 1 allele R1 (1338 aa).

The signal sequence occupies residues 1-21; the sequence is MWQFIRSRILTVIIFIGAAHG. 5 N-linked (GlcNAc...) asparagine glycosylation sites follow: asparagine 68, asparagine 199, asparagine 242, asparagine 312, and asparagine 481. A may contain the cleavage site region spans residues 580–609; that stretch reads ENEFDIFHSLGLFARTLDDILFDSANEKTG. N-linked (GlcNAc...) asparagine glycans are attached at residues asparagine 637, asparagine 728, and asparagine 813. Residues 859–862 constitute a cross-link (isoglutamyl cysteine thioester (Cys-Gln)); it reads CGEQ. Asparagine 919 and asparagine 1065 each carry an N-linked (GlcNAc...) asparagine glycan. 3 cysteine pairs are disulfide-bonded: cysteine 1217/cysteine 1283, cysteine 1326/cysteine 1338, and cysteine 1329/cysteine 1334.

In terms of assembly, heterodimer of a TEP1-N chain and an TEP1-C chain non-covalently linked. Forms a complex composed of TEP1-N and TEP1-C heterodimer, LRIM1 and APL1C; the interaction stabilizes TEP1-N and TEP1-C heterodimer, prevents its binding to tissues while circulating in the hemolymph and protects the thioester bond from hydrolysis. Mature TEP1 and to a lesser extent full-length TEP1 interact with SPCLIP1; the interaction is induced by microbial infection. In the hemolymph, the full-length protein is cleaved by an unknow protease into a 75kDa N-terminal (TEP1-N) chain and an 80kDa C-terminal (TEP1-C) chain which remain non-covalently linked. The TEP1-C chain contains the thioester bond which covalently binds to the pathogen surface. Cleavage is induced by bacterial infection or aseptic wound injury. During embryonic and pupal development, the cleaved form is the predominant form. In terms of processing, N-glycosylated.

The protein resides in the secreted. Its function is as follows. Plays an essential role in the innate immune response against bacteria, fungi and protozoa infection. After proteolytic cleavage, the protein C-terminus binds covalently through a thioester bond to the pathogen surface resulting in pathogen clearance either by melanization or lysis. Initiate the recruitment and activation of a cascade of proteases, mostly of CLIP-domain serine proteases, which leads to the proteolytic cleavage of the prophenoloxidase (PPO) into active phenoloxidase (PO), the rate-limiting enzyme in melanin biosynthesis. In response to parasite P.berghei-mediated infection, binds to and mediates killing of ookinetes, as they egress from midgut epithelial cells into the basal labyrinth, by both lysis and melanization. During bacterial infection, binds to both Gram-positive and Gram-negative bacteria but only promotes phagocytosis of Gram-negative bacteria. Promotes the accumulation of SPCLIP1 onto the surface of P.berghei ookinetes and bacterium E.coli which leads to the melanization of the pathogen. Recruits CLIPA2 to bacteria surface. In response to bacterial infection, required for periostial hemocyte aggregation, but not for the aggregation of sessile hemocytes in non-periostial regions. During the late stage of fungus B.bassiana-mediated infection, required for the initiation of hyphae melanization by binding to the surface of hyphae and recruiting prophenoloxidase PPO to them. Plays a role in male fertility by binding to defective sperm cells and promoting their removal during spermatogenesis. In terms of biological role, binds to and mediates killing of parasite P.bergei ookinetes by lysis and melanization. Binds covalently through a thioester bond to the pathogen surface resulting in pathogen clearance. The protein is Thioester-containing protein 1 allele R1 of Anopheles gambiae (African malaria mosquito).